Here is a 211-residue protein sequence, read N- to C-terminus: Large ribosomal subunit protein uL3 (211 aa).

Positions 122-156 are disordered; that stretch reads NQKRNNFGRGPMSHGSKNHRAPGSIGAGTTPGRVY.

This sequence belongs to the universal ribosomal protein uL3 family. As to quaternary structure, part of the 50S ribosomal subunit. Forms a cluster with proteins L14 and L19.

Its function is as follows. One of the primary rRNA binding proteins, it binds directly near the 3'-end of the 23S rRNA, where it nucleates assembly of the 50S subunit. The protein is Large ribosomal subunit protein uL3 of Nostoc sp. (strain PCC 7120 / SAG 25.82 / UTEX 2576).